Here is a 220-residue protein sequence, read N- to C-terminus: Flagellin A2 (220 aa).

Residues 1–11 (MFNNITDDDRG) constitute a propeptide that is removed on maturation. N-linked (GlcNAc...) asparagine glycosylation is found at N78, N95, N112, and N124.

Belongs to the archaeal flagellin family. Post-translationally, glycosylated by a pentasaccharide similar to the S-layer glycoprotein, probably comprising a hexose, 2 hexuronic acids, a methyl ester of a hexuronic acid and mannose.

The protein localises to the archaeal flagellum. Flagellin that plays both structural and regulatory roles in flagella biosynthesis. Does not constitute a major flagellin in terms of abundance contrary to FlgA1: may regulate the flagella-dependent swimming motility depending on the relative abundance of FlgA1. Not involved in PibD-dependent surface adhesion. The polypeptide is Flagellin A2 (flgA2) (Haloferax volcanii (strain ATCC 29605 / DSM 3757 / JCM 8879 / NBRC 14742 / NCIMB 2012 / VKM B-1768 / DS2) (Halobacterium volcanii)).